A 412-amino-acid chain; its full sequence is Putative competence-damage inducible protein (412 aa).

This sequence belongs to the CinA family.

The protein is Putative competence-damage inducible protein of Bacillus cereus (strain B4264).